Consider the following 453-residue polypeptide: Asparagine--tRNA ligase (453 aa).

It belongs to the class-II aminoacyl-tRNA synthetase family. As to quaternary structure, homodimer.

It is found in the cytoplasm. The catalysed reaction is tRNA(Asn) + L-asparagine + ATP = L-asparaginyl-tRNA(Asn) + AMP + diphosphate + H(+). The polypeptide is Asparagine--tRNA ligase (Malacoplasma penetrans (strain HF-2) (Mycoplasma penetrans)).